The chain runs to 460 residues: Elongation factor 1-alpha (460 aa).

G2 is modified (n,N,N-trimethylglycine). K3 carries the N6,N6-dimethyllysine; alternate modification. The residue at position 3 (K3) is an N6-methyllysine; alternate. One can recognise a tr-type G domain in the interval 5–240; that stretch reads KLHVNVVVIG…DAIEPPVRPS (236 aa). The G1 stretch occupies residues 14-21; sequence GHVDSGKS. 14 to 21 provides a ligand contact to GTP; sequence GHVDSGKS. K30 carries the post-translational modification N6-methyllysine. Residues 70-74 are G2; it reads GITID. An N6,N6,N6-trimethyllysine modification is found at K79. Residues 91–94 form a G3 region; it reads DAPG. GTP-binding positions include 91–95 and 153–156; these read DAPGH and NKMD. The G4 stretch occupies residues 153 to 156; it reads NKMD. Positions 192-194 are G5; sequence SGW. K316 carries the post-translational modification N6,N6-dimethyllysine; alternate. N6-methyllysine; alternate is present on K316. Residue K390 is modified to N6-methyllysine.

Belongs to the TRAFAC class translation factor GTPase superfamily. Classic translation factor GTPase family. EF-Tu/EF-1A subfamily.

It localises to the cytoplasm. Functionally, this protein promotes the GTP-dependent binding of aminoacyl-tRNA to the A-site of ribosomes during protein biosynthesis. This chain is Elongation factor 1-alpha (TEF1), found in Schizophyllum commune (Split gill fungus).